The sequence spans 123 residues: Small ribosomal subunit protein uS12 (123 aa).

Aspartate 89 is subject to 3-methylthioaspartic acid.

This sequence belongs to the universal ribosomal protein uS12 family. As to quaternary structure, part of the 30S ribosomal subunit. Contacts proteins S8 and S17. May interact with IF1 in the 30S initiation complex.

With S4 and S5 plays an important role in translational accuracy. Functionally, interacts with and stabilizes bases of the 16S rRNA that are involved in tRNA selection in the A site and with the mRNA backbone. Located at the interface of the 30S and 50S subunits, it traverses the body of the 30S subunit contacting proteins on the other side and probably holding the rRNA structure together. The combined cluster of proteins S8, S12 and S17 appears to hold together the shoulder and platform of the 30S subunit. This chain is Small ribosomal subunit protein uS12, found in Methylobacterium sp. (strain 4-46).